Consider the following 389-residue polypeptide: Serpentine receptor class alpha/beta-14 (389 aa).

Topologically, residues 1 to 45 (MPSDDFVKTARKALISHSVSIQNYTEDDCQIAFHATTNSFMQTIR) are extracellular. Asn-23 carries an N-linked (GlcNAc...) asparagine glycan. The chain crosses the membrane as a helical span at residues 46–66 (LVHIFFCTFGAISSSLFIYVL). The Cytoplasmic portion of the chain corresponds to 67–81 (LNSSSRNLHRNLRIS). Residues 82-102 (LASLAFAALIACLQLDFIAFY) traverse the membrane as a helical segment. The Extracellular segment spans residues 103 to 123 (HLALTLTADNACDSMYEARKC). Cysteines 123 and 198 form a disulfide. The chain crosses the membrane as a helical span at residues 124-144 (AILRFPVVLSIYATLCGIIVL). Residues 145–167 (AIERTIATLKYKTYEANGSRVVG) are Cytoplasmic-facing. The helical transmembrane segment at 168–188 (LVLVTGQWFVCIIVAVFSVLL) threads the bilayer. Topologically, residues 189–208 (RSDPGYVHYCTAYVSHPRTS) are extracellular. The helical transmembrane segment at 209 to 229 (VFSLCFMSALEVATLVYFVLL) threads the bilayer. The Cytoplasmic segment spans residues 230–268 (LQSNQRRQVNEFVNKAMHSLSERYQLQENVRIMKILIPS). Residues 269 to 289 (ITVHAILGFIGLGSMLAFAII) form a helical membrane-spanning segment. Residues 290-303 (YRYADERLIVGFAP) lie on the Extracellular side of the membrane. A helical transmembrane segment spans residues 304-324 (FSEVVLLVIPIYAVVFPIVAV). Residues 325–389 (VQNKQLRLAS…FDLLNEMWKK (65 aa)) lie on the Cytoplasmic side of the membrane.

This sequence belongs to the nematode receptor-like protein srab family.

It is found in the membrane. The sequence is that of Serpentine receptor class alpha/beta-14 from Caenorhabditis elegans.